The primary structure comprises 1111 residues: Isoleucine--tRNA ligase (1111 aa).

The short motif at 52 to 62 (PFANGLPHYGH) is the 'HIGH' region element. Residues 645-649 (KLSKR) carry the 'KMSKS' region motif. ATP is bound at residue Lys-648.

The protein belongs to the class-I aminoacyl-tRNA synthetase family. IleS type 2 subfamily. Monomer. Requires Zn(2+) as cofactor.

It is found in the cytoplasm. The catalysed reaction is tRNA(Ile) + L-isoleucine + ATP = L-isoleucyl-tRNA(Ile) + AMP + diphosphate. Catalyzes the attachment of isoleucine to tRNA(Ile). As IleRS can inadvertently accommodate and process structurally similar amino acids such as valine, to avoid such errors it has two additional distinct tRNA(Ile)-dependent editing activities. One activity is designated as 'pretransfer' editing and involves the hydrolysis of activated Val-AMP. The other activity is designated 'posttransfer' editing and involves deacylation of mischarged Val-tRNA(Ile). The protein is Isoleucine--tRNA ligase of Wolbachia pipientis wMel.